We begin with the raw amino-acid sequence, 101 residues long: uncharacterized protein (101 aa).

This is an uncharacterized protein from Gracula (BFDV).